Consider the following 485-residue polypeptide: NADH-quinone oxidoreductase subunit N (485 aa).

14 helical membrane passes run Leu8 to Ile28, Phe35 to Val55, Gly71 to Ala91, Phe105 to Leu125, Ser127 to Phe147, Tyr159 to Ala179, Leu203 to Phe223, Pro235 to Met255, Val271 to Gln291, Leu297 to Gln317, Val326 to Leu346, Ala373 to Ile393, Trp408 to Val430, and Tyr450 to Trp470.

The protein belongs to the complex I subunit 2 family. NDH-1 is composed of 13 different subunits. Subunits NuoA, H, J, K, L, M, N constitute the membrane sector of the complex.

It is found in the cell inner membrane. It carries out the reaction a quinone + NADH + 5 H(+)(in) = a quinol + NAD(+) + 4 H(+)(out). NDH-1 shuttles electrons from NADH, via FMN and iron-sulfur (Fe-S) centers, to quinones in the respiratory chain. The immediate electron acceptor for the enzyme in this species is believed to be ubiquinone. Couples the redox reaction to proton translocation (for every two electrons transferred, four hydrogen ions are translocated across the cytoplasmic membrane), and thus conserves the redox energy in a proton gradient. The sequence is that of NADH-quinone oxidoreductase subunit N from Shigella boydii serotype 4 (strain Sb227).